The chain runs to 167 residues: Crossover junction endodeoxyribonuclease RuvC (167 aa).

Active-site residues include Asp-7, Glu-67, and Asp-139. Mg(2+) is bound by residues Asp-7, Glu-67, and Asp-139.

The protein belongs to the RuvC family. As to quaternary structure, homodimer which binds Holliday junction (HJ) DNA. The HJ becomes 2-fold symmetrical on binding to RuvC with unstacked arms; it has a different conformation from HJ DNA in complex with RuvA. In the full resolvosome a probable DNA-RuvA(4)-RuvB(12)-RuvC(2) complex forms which resolves the HJ. It depends on Mg(2+) as a cofactor.

It is found in the cytoplasm. The enzyme catalyses Endonucleolytic cleavage at a junction such as a reciprocal single-stranded crossover between two homologous DNA duplexes (Holliday junction).. Functionally, the RuvA-RuvB-RuvC complex processes Holliday junction (HJ) DNA during genetic recombination and DNA repair. Endonuclease that resolves HJ intermediates. Cleaves cruciform DNA by making single-stranded nicks across the HJ at symmetrical positions within the homologous arms, yielding a 5'-phosphate and a 3'-hydroxyl group; requires a central core of homology in the junction. The consensus cleavage sequence is 5'-(A/T)TT(C/G)-3'. Cleavage occurs on the 3'-side of the TT dinucleotide at the point of strand exchange. HJ branch migration catalyzed by RuvA-RuvB allows RuvC to scan DNA until it finds its consensus sequence, where it cleaves and resolves the cruciform DNA. The polypeptide is Crossover junction endodeoxyribonuclease RuvC (Akkermansia muciniphila (strain ATCC BAA-835 / DSM 22959 / JCM 33894 / BCRC 81048 / CCUG 64013 / CIP 107961 / Muc)).